A 421-amino-acid polypeptide reads, in one-letter code: EGFR adapter protein (421 aa).

Disordered stretches follow at residues 18-94 (TFIS…PQLQ), 109-154 (DVQE…RLVD), 173-194 (EDSRPLMHSTCGSSLTSGSGCG), and 372-396 (PVPLTLPRPPSTRSQRSQGAYAGGT). The span at 21 to 30 (SSSSASSSSS) shows a compositional bias: low complexity. Residues 62 to 89 (FFHHHHPPAHPHPPRQQPHPHSHSHPHP) are compositionally biased toward basic residues. Basic and acidic residues predominate over residues 109 to 120 (DVQELSGQEHPH). The span at 181-194 (STCGSSLTSGSGCG) shows a compositional bias: low complexity. The region spanning 286 to 379 (WFQAGIPREI…LLPVPLTLPR (94 aa)) is the SH2 domain.

In terms of assembly, may interact (via SH2 domain) with Egfr (when phosphorylated). As to expression, detected along the wing margin, with high levels of expression in two stripes of cells on either side of the dorsal/ventral boundary and lower levels of expression in a small region at the anteroposterior boundary (at protein level). High levels of expression along two parallel stripes of cells on either side of the wing pouch dorsal/ventral boundary, and slightly lower levels of expression in a region either side of the anteroposterior boundary. Also expressed in discrete regions of the wing imaginal disk outside of the pouch. Expressed in eye imaginal disk photoreceptors with highest levels of expression in R7 photoreceptor cells.

Functionally, involved in the negative regulation of the Egfr/Ras signaling pathway. During wing morphogenesis, may function redundantly with PVRAP to inhibit Egfr activity and prevent uncontrolled cell growth. The sequence is that of EGFR adapter protein from Drosophila melanogaster (Fruit fly).